The following is a 1265-amino-acid chain: Stromal processing peptidase, chloroplastic (1265 aa).

The transit peptide at 1-143 (MASSSSSIFT…SLRKHSQIVN (143 aa)) directs the protein to the chloroplast. His240 is a Zn(2+) binding site. Glu243 serves as the catalytic Proton acceptor. His244 contributes to the Zn(2+) binding site. The active site involves Glu314. Position 321 (Glu321) interacts with Zn(2+).

The protein belongs to the peptidase M16 family. The cofactor is Zn(2+).

It localises to the plastid. Its subcellular location is the chloroplast stroma. Functionally, cleaves presequences (transit peptides) from chloroplastic protein precursors. Initially recognizes a precursor by binding to the C-terminus of its transit peptide and then removes the transit peptide in a single endoproteolytic step. In a next step, pursues the cleavage of transit peptide to a subfragment form. This Arabidopsis thaliana (Mouse-ear cress) protein is Stromal processing peptidase, chloroplastic.